We begin with the raw amino-acid sequence, 393 residues long: Acetate kinase (393 aa).

Asn-6 lines the Mg(2+) pocket. An ATP-binding site is contributed by Lys-13. Substrate is bound at residue Arg-87. The active-site Proton donor/acceptor is Asp-143. ATP contacts are provided by residues 203-207 (HLGNG), 278-280 (DMR), and 326-330 (GIGEN). Mg(2+) is bound at residue Glu-380.

It belongs to the acetokinase family. Homodimer. It depends on Mg(2+) as a cofactor. The cofactor is Mn(2+).

It localises to the cytoplasm. It catalyses the reaction acetate + ATP = acetyl phosphate + ADP. The protein operates within metabolic intermediate biosynthesis; acetyl-CoA biosynthesis; acetyl-CoA from acetate: step 1/2. Functionally, catalyzes the formation of acetyl phosphate from acetate and ATP. Can also catalyze the reverse reaction. The chain is Acetate kinase from Mycoplasma mycoides subsp. mycoides SC (strain CCUG 32753 / NCTC 10114 / PG1).